The sequence spans 41 residues: uncharacterized protein (41 aa).

The disordered stretch occupies residues 19 to 41; the sequence is NSTRNSSSSSRSSYSSRTTVFSL.

This is an uncharacterized protein from Dictyostelium discoideum (Social amoeba).